The primary structure comprises 463 residues: Perilipin-5 (463 aa).

Residues 1-32 are disordered; the sequence is MDQRGEDTTLAPHSRMSGDQTAQDPGSSLGEL. The interaction with LIPE stretch occupies residues 1-123; that stretch reads MDQRGEDTTL…KLEEKLPFLQ (123 aa). The tract at residues 1–188 is essential for lipid droplet targeting; that stretch reads MDQRGEDTTL…RFLPMTEAEL (188 aa). Phosphoserine occurs at positions 17, 163, and 337. Positions 17–26 are enriched in polar residues; the sequence is SGDQTAQDPG. An interaction with PNPLA2 and ABHD5 region spans residues 200–463; the sequence is VGTVEEQRQQ…KHTMMPELDF (264 aa). The segment at 433-463 is disordered; that stretch reads AWEAESADPGGQEAEPPRGQGKHTMMPELDF. Residues 444–463 are necessary for mitochondria recruitment at the lipid droplet surface; that stretch reads QEAEPPRGQGKHTMMPELDF.

It belongs to the perilipin family. In terms of assembly, homooligomer. Interacts with PNPLA2; prevents interaction of PNPLA2 with ABHD5. Interacts with ABHD5; targets ABHD5 to lipid droplets and promotes interaction of ABHD5 with PNPLA2. Interacts with LIPE. Phosphorylated by PKA. Phosphorylated on serine in skeletal muscle at rest or with lipolytic stimulation. As to expression, highly expressed in oxidative tissues, including heart, liver, brown adipose tissue (BAT) and slow-twitch fibers of skeletal muscle. Lower expression in epididymal white adipose tissue and anterior tibialis and quadriceps. Expressed in adrenal glands. Isoform 2 has the highest expression in heart.

Its subcellular location is the lipid droplet. It is found in the cytoplasm. The protein localises to the mitochondrion. Its function is as follows. Lipid droplet-associated protein that maintains the balance between lipogenesis and lipolysis and also regulates fatty acid oxidation in oxidative tissues. Recruits mitochondria to the surface of lipid droplets and is involved in lipid droplet homeostasis by regulating both the storage of fatty acids in the form of triglycerides and the release of fatty acids for mitochondrial fatty acid oxidation. In lipid droplet triacylglycerol hydrolysis, plays a role as a scaffolding protein for three major key lipolytic players: ABHD5, PNPLA2 and LIPE. Reduces the triacylglycerol hydrolase activity of PNPLA2 by recruiting and sequestering PNPLA2 to lipid droplets. Phosphorylation by PKA enables lipolysis probably by promoting release of ABHD5 from the perilipin scaffold and by facilitating interaction of ABHD5 with PNPLA2. Also increases lipolysis through interaction with LIPE and upon PKA-mediated phosphorylation of LIPE. The chain is Perilipin-5 (Plin5) from Mus musculus (Mouse).